The chain runs to 191 residues: Fe/S biogenesis protein NfuA (191 aa).

Residues cysteine 149 and cysteine 152 each contribute to the [4Fe-4S] cluster site.

It belongs to the NfuA family. In terms of assembly, homodimer. [4Fe-4S] cluster serves as cofactor.

Involved in iron-sulfur cluster biogenesis. Binds a 4Fe-4S cluster, can transfer this cluster to apoproteins, and thereby intervenes in the maturation of Fe/S proteins. Could also act as a scaffold/chaperone for damaged Fe/S proteins. The chain is Fe/S biogenesis protein NfuA from Yersinia enterocolitica serotype O:8 / biotype 1B (strain NCTC 13174 / 8081).